A 155-amino-acid chain; its full sequence is MGETPFWKTKGLEEMTGAEWESLCDGCGLCCLNKLEDWDSSEIAWTSIRCTLLDGESCRCKDYDNRQATVPDCIQLTPKAVREISWLPPTCGYRLVAEGRDLYWWHPLVSGDPETVHAAGISVRGRTVAEDGIDIEDYEDYLVTWPLEVGREPAD.

It belongs to the UPF0260 family.

The chain is UPF0260 protein R01011 from Rhizobium meliloti (strain 1021) (Ensifer meliloti).